The primary structure comprises 276 residues: Orotidine 5'-phosphate decarboxylase (276 aa).

Residue Lys-93 is the Proton donor of the active site.

It belongs to the OMP decarboxylase family. Type 2 subfamily.

It catalyses the reaction orotidine 5'-phosphate + H(+) = UMP + CO2. Its pathway is pyrimidine metabolism; UMP biosynthesis via de novo pathway; UMP from orotate: step 2/2. The polypeptide is Orotidine 5'-phosphate decarboxylase (Halorubrum lacusprofundi (strain ATCC 49239 / DSM 5036 / JCM 8891 / ACAM 34)).